Here is a 1505-residue protein sequence, read N- to C-terminus: Synaptonemal complex protein 2 (1505 aa).

A disordered region spans residues 439-483 (EKSNLQKKLTNPLEPDNSSSQRDRKNSQDEITTPSRKKMSEASMI). 2 positions are modified to phosphoserine: Ser-457 and Ser-465. Residue Thr-471 is modified to Phosphothreonine. Position 494 is a phosphoserine (Ser-494). Phosphothreonine is present on Thr-503. Phosphoserine occurs at positions 507, 516, 525, and 534. The interval 536 to 571 (KSRQSDGRNRGNNRANHNKTATVQNKGHEHHESPDQ) is disordered. Thr-613 and Thr-638 each carry phosphothreonine. Phosphoserine occurs at positions 651, 655, and 746. A disordered region spans residues 745–764 (KSPSRKSMRSHTKSRKELMS). Residues 748 to 758 (SRKSMRSHTKS) are compositionally biased toward basic residues. Position 920 is a phosphoserine (Ser-920). Position 922 is a phosphothreonine (Thr-922). Disordered regions lie at residues 949-974 (YSRN…QPRS) and 1035-1080 (KEET…NGRE). Over residues 953–962 (KNTKKCKSIK) the composition is skewed to basic residues. Residues Ser-1121, Ser-1123, Ser-1130, Ser-1146, Ser-1150, Ser-1162, Ser-1165, and Ser-1170 each carry the phosphoserine modification. Thr-1174 carries the post-translational modification Phosphothreonine. Ser-1188 is modified (phosphoserine). The tract at residues 1199-1239 (NSYSDVSSNSSEKLYMEPESPDSCENHVQSKREENHAASPF) is disordered. A compositionally biased stretch (low complexity) spans 1200 to 1209 (SYSDVSSNSS). 2 positions are modified to phosphoserine: Ser-1218 and Ser-1221. A compositionally biased stretch (basic and acidic residues) spans 1222 to 1234 (CENHVQSKREENH). Phosphoserine occurs at positions 1237, 1280, and 1283. Phosphothreonine is present on Thr-1318. Residues 1384 to 1435 (ENIDKFQVTLLDELEKVEKDSQTLRDLEKEFVDIEEKIVHKMRAFHQSERER) adopt a coiled-coil conformation.

The protein belongs to the SYCP2 family. Component of the lateral elements of synaptonemal complexes. Interacts with TEX11. Heterodimer with SYCP3. Interacts with SYCP3, SMC1A and SMC3. In terms of processing, phosphorylated. Detected in spermatocytes and testis (at protein level). Spermatocytes and oocytes. Meiotic prophase cells.

It is found in the nucleus. The protein localises to the chromosome. Major component of the axial/lateral elements of synaptonemal complexes (SCS) during meiotic prophase. Plays a role in the assembly of synaptonemal complexes. Required for normal meiotic chromosome synapsis during oocyte and spermatocyte development and for normal male and female fertility. Required for insertion of SYCP3 into synaptonemal complexes. May be involved in the organization of chromatin by temporarily binding to DNA scaffold attachment regions. Requires SYCP3, but not SYCP1, in order to be incorporated into the axial/lateral elements. In Rattus norvegicus (Rat), this protein is Synaptonemal complex protein 2 (Sycp2).